Consider the following 308-residue polypeptide: Bacitracin transport ATP-binding protein BcrA (308 aa).

The region spanning 8–236 is the ABC transporter domain; that stretch reads IETENLTKQY…NRKYTEFDVS (229 aa). 40–47 lines the ATP pocket; that stretch reads GRNGAGKT.

This sequence belongs to the ABC transporter superfamily. The complex is probably composed of two ATP-binding proteins (BcrA) and two transmembrane proteins (BcrB).

Essential for high-level bacitracin resistance. Part of the ABC transporter complex BcrAB. Probably responsible for energy coupling to the transport system. The protein is Bacitracin transport ATP-binding protein BcrA of Enterococcus faecalis (Streptococcus faecalis).